Here is a 338-residue protein sequence, read N- to C-terminus: uncharacterized protein (338 aa).

The chain crosses the membrane as a helical span at residues 20–40 (IFFTLTFSLSNLFLAICYLFL).

It localises to the membrane. This is an uncharacterized protein from Schizosaccharomyces pombe (strain 972 / ATCC 24843) (Fission yeast).